The following is a 105-amino-acid chain: Probable tetrachloroethene reductive dehalogenase membrane anchor protein (105 aa).

The next 3 helical transmembrane spans lie at isoleucine 3 to isoleucine 23, isoleucine 35 to glycine 55, and alanine 66 to tyrosine 86.

This sequence belongs to the PceB family.

Its subcellular location is the cell membrane. Its function is as follows. May act as a membrane anchor for the tetrachloroethene reductive dehalogenase PceA. The polypeptide is Probable tetrachloroethene reductive dehalogenase membrane anchor protein (Dehalobacter restrictus (strain DSM 9455 / PER-K23)).